Here is a 193-residue protein sequence, read N- to C-terminus: Thymidine kinase (193 aa).

ATP-binding positions include 16-23 (GPMFSGKS) and 89-92 (DEIQ). Residue E90 is the Proton acceptor of the active site. Positions 146, 149, 184, and 187 each coordinate Zn(2+).

This sequence belongs to the thymidine kinase family. Homotetramer.

Its subcellular location is the cytoplasm. It catalyses the reaction thymidine + ATP = dTMP + ADP + H(+). This chain is Thymidine kinase, found in Caldanaerobacter subterraneus subsp. tengcongensis (strain DSM 15242 / JCM 11007 / NBRC 100824 / MB4) (Thermoanaerobacter tengcongensis).